The chain runs to 647 residues: Threonine--tRNA ligase (647 aa).

Positions 1–61 (MIKITFPDGA…TEDGAIEIVT (61 aa)) constitute a TGS domain. The interval 242–540 (DHRKLGKELD…LIENYKGAFP (299 aa)) is catalytic. Residues cysteine 336, histidine 387, and histidine 517 each coordinate Zn(2+).

This sequence belongs to the class-II aminoacyl-tRNA synthetase family. As to quaternary structure, homodimer. Zn(2+) is required as a cofactor.

It localises to the cytoplasm. It carries out the reaction tRNA(Thr) + L-threonine + ATP = L-threonyl-tRNA(Thr) + AMP + diphosphate + H(+). Its function is as follows. Catalyzes the attachment of threonine to tRNA(Thr) in a two-step reaction: L-threonine is first activated by ATP to form Thr-AMP and then transferred to the acceptor end of tRNA(Thr). Also edits incorrectly charged L-seryl-tRNA(Thr). This is Threonine--tRNA ligase from Streptococcus sanguinis (strain SK36).